A 509-amino-acid polypeptide reads, in one-letter code: MGCGCSSHPEDDWMENIDVCENCHYPIVPLDGKATLLFRNGSEVRDPLVRYEGSNPPASPLQDNLVIALHSYKPSHDGDLGFEKGEQLRILEQNGEWWKAQSLTTGQEGFIPFNFVAKANSLEPEPWFFKNLSRKDAERQLLAPGNTHGSFLIRESESTAGSFSLSVRDFDQNQGEVVKHYKIRNLDNGGFYISPRITFPGLHELVRHYTNASDGLCTRLSRPCQTQKPQKPWWEDEWEVPRETLKLVERLGAGQFGEVWMGYYNDHTKVAVKSLKQGSMSPDAFLAEANLMKQLQHQRLVRLYAVVTQEPIYIITEYMENGSLVDFLKTPSGIKLTINKLLDMAAQIAEGMAFIEERNYIHRDLRAANILVSDTLSCKIADFGLARLIEDNEYTAREGAKFPIKWTAPEAINYGTFTIKSDVWSFGILLTEIVTHGRIPYPGMTNPEVIQNLERGYRMVRPDNCPEELYHLMMLCWKERPEDRPTFDYLRSVLEDFFTATEGQYQPQP.

Glycine 2 carries the N-myristoyl glycine lipid modification. An interactions with CD4 and CD8 region spans residues 2-72; the sequence is GCGCSSHPED…DNLVIALHSY (71 aa). S-palmitoyl cysteine attachment occurs at residues cysteine 3 and cysteine 5. The SH3 domain maps to 61 to 121; the sequence is LQDNLVIALH…PFNFVAKANS (61 aa). A Glycyl lysine isopeptide (Lys-Gly) (interchain with G-Cter in ubiquitin) cross-link involves residue lysine 99. Serine 102 is modified (phosphoserine). One can recognise an SH2 domain in the interval 127-224; the sequence is WFFKNLSRKD…GLCTRLSRPC (98 aa). The segment at 154 to 242 is interaction with PTPRH; that stretch reads RESESTAGSF…WWEDEWEVPR (89 aa). Phosphothreonine is present on threonine 159. Residue serine 162 is modified to Phosphoserine. The residue at position 192 (tyrosine 192) is a Phosphotyrosine. At serine 194 the chain carries Phosphoserine. Positions 245–498 constitute a Protein kinase domain; the sequence is LKLVERLGAG…YLRSVLEDFF (254 aa). ATP-binding positions include 251–259 and lysine 273; that span reads LGAGQFGEV. A Glycyl lysine isopeptide (Lys-Gly) (interchain with G-Cter in ubiquitin) cross-link involves residue lysine 276. The active-site Proton acceptor is aspartate 364. Tyrosine 394 is modified (phosphotyrosine; by autocatalysis). Tyrosine 505 bears the Phosphotyrosine; by CSK mark.

Belongs to the protein kinase superfamily. Tyr protein kinase family. SRC subfamily. In terms of assembly, binds to the cytoplasmic domain of cell surface receptors, such as AXL, CD2, CD4, CD5, CD8, CD44, CD45 and CD122. Also binds to effector molecules, such as PI4K, VAV1, RASA1, FYB1 and to other protein kinases including CDK1, RAF1, ZAP70 and SYK. Binds to phosphatidylinositol 3'-kinase (PI3K) from T-lymphocytes through its SH3 domain and to the tyrosine phosphorylated form of KHDRBS1/p70 through its SH2 domain. Interacts with SQSTM1. Interacts with phosphorylated LIME1. LIME1. Interacts with CBLB and PTPRH. Interacts with RUNX3. Forms a signaling complex with EPHA1, PTK2B and PI3-KINASE; upon activation by EFNA1 which may regulate T-lymphocytes migration. Associates with ZAP70 and RHOH; these interactions allow LCK-mediated RHOH and CD3 subunit phosphorylation in the presence of functional ZAP70. Interacts with CEACAM1 (via cytoplasmic domain); mediates CEACAM1 phosphorylation resulting in PTPN6 recruitment that dephosphorylates TCR stimulation-induced CD247 and ZAP70. Interacts with CD160. Interacts with CD48. In terms of processing, autophosphorylated on Tyr-394, increasing enzymatic activity, this site is dephosphorylated by PTN22. Phosphorylated on Tyr-505 by CSK, decreasing activity. Dephosphorylated by PTPRC/CD45. Dephosphorylation at Tyr-394 by PTPN2 negatively regulates T-cells differentiation. Dephosphorylation at Tyr-394 by DUSP22 negatively regulates T-cell receptor signaling. Post-translationally, myristoylation is required prior to palmitoylation. Palmitoylation regulates association with the plasma membrane and could be mediated by ZDHHC2. In terms of processing, 'Lys-63'-linked ubiquitinated at Lys-99 and Lys-276 by UBR2; this modification is required for autophosphorylation at Tyr-394.

The protein localises to the cell membrane. Its subcellular location is the cytoplasm. The protein resides in the cytosol. The enzyme catalyses L-tyrosyl-[protein] + ATP = O-phospho-L-tyrosyl-[protein] + ADP + H(+). Its activity is regulated as follows. The relative activities of the inhibitory tyrosine-protein kinase CSK and the activating tyrosine-protein phosphatase PTPRC/CD45 determine the level of LCK activity. These interactions allow rapid and efficient activation of LCK in response to TCR stimulation. Non-receptor tyrosine-protein kinase that plays an essential role in the selection and maturation of developing T-cells in the thymus and in the function of mature T-cells. Plays a key role in T-cell antigen receptor (TCR)-linked signal transduction pathways. Constitutively associated with the cytoplasmic portions of the CD4 and CD8 surface receptors. Association of the TCR with a peptide antigen-bound MHC complex facilitates the interaction of CD4 and CD8 with MHC class II and class I molecules, respectively, thereby recruiting the associated LCK protein to the vicinity of the TCR/CD3 complex. LCK then phosphorylates tyrosine residues within the immunoreceptor tyrosine-based activation motifs (ITAM) of the cytoplasmic tails of the TCR-gamma chains and CD3 subunits, initiating the TCR/CD3 signaling pathway. Once stimulated, the TCR recruits the tyrosine kinase ZAP70, that becomes phosphorylated and activated by LCK. Following this, a large number of signaling molecules are recruited, ultimately leading to lymphokine production. LCK also contributes to signaling by other receptor molecules. Associates directly with the cytoplasmic tail of CD2, which leads to hyperphosphorylation and activation of LCK. Also plays a role in the IL2 receptor-linked signaling pathway that controls the T-cell proliferative response. Binding of IL2 to its receptor results in increased activity of LCK. Is expressed at all stages of thymocyte development and is required for the regulation of maturation events that are governed by both pre-TCR and mature alpha beta TCR. Phosphorylates other substrates including RUNX3, PTK2B/PYK2, the microtubule-associated protein MAPT, RHOH or TYROBP. Interacts with UNC119; this interaction plays a crucial role in activation of LCK. The polypeptide is Tyrosine-protein kinase Lck (LCK) (Aotus nancymaae (Ma's night monkey)).